A 550-amino-acid polypeptide reads, in one-letter code: Calcyphosin-2 (550 aa).

Disordered regions lie at residues 1–20 and 175–198; these read MVPPLDLGSLVDSDEEDNFS and ISDPEQDLNTKNQESSRVPPDSER. A compositionally biased stretch (polar residues) spans 181-190; it reads DLNTKNQESS. 3 consecutive EF-hand domains span residues 379 to 414, 415 to 452, and 453 to 488; these read RILTGLGRYFQGLDKEGNGLLEKADFQQALKTFHLE, VSEQDFESFWLILQGYGHSKNKVDYGEFKRAIFGEMNE, and YRKSFVRKAFMQLDFNKTGIVSVIDIRKCYCAKKHP. 4 residues coordinate Ca(2+): D466, N468, T470, and D477.

This Mus musculus (Mouse) protein is Calcyphosin-2 (Caps2).